We begin with the raw amino-acid sequence, 1039 residues long: Kinesin-like protein KIN-5B (1039 aa).

A Kinesin motor domain is found at 48-390 (NVQVILRCKP…LDYAYRAKNI (343 aa)). 134–141 (GQTGTGKT) serves as a coordination point for ATP. A disordered region spans residues 1008-1039 (TLSEEHTSLEKISTKQGLGEANNRTPFLEVNK). Basic and acidic residues predominate over residues 1010–1020 (SEEHTSLEKIS).

The protein belongs to the TRAFAC class myosin-kinesin ATPase superfamily. Kinesin family. KIN-5/BimC subfamily.

It is found in the cytoplasm. It localises to the cytoskeleton. Its subcellular location is the spindle. Responsible for microtubule translocation. May be important for the organization of phragmoplast-specific arrays of microtubules. Plays an essential role in stabilizing the mitotic spindle. Required during mitotic cytokinesis. The polypeptide is Kinesin-like protein KIN-5B (Arabidopsis thaliana (Mouse-ear cress)).